A 95-amino-acid chain; its full sequence is UPF0223 protein Bsph_1378 (95 aa).

It belongs to the UPF0223 family.

The polypeptide is UPF0223 protein Bsph_1378 (Lysinibacillus sphaericus (strain C3-41)).